Here is a 930-residue protein sequence, read N- to C-terminus: Vacuolar membrane protease (930 aa).

The disordered stretch occupies residues 1–28 (MPQEEVHDTSSVSDDNLTNTGGGGSNYY). Residues 1–49 (MPQEEVHDTSSVSDDNLTNTGGGGSNYYNSHNQPNVFVRAIRSIFGYRK) are Cytoplasmic-facing. The helical transmembrane segment at 50–70 (TSLTLFVILTIIFTIALSLYD) threads the bilayer. Topologically, residues 71–379 (NNLDLTIELP…YFFSSPISAL (309 aa)) are vacuolar. Residue asparagine 163 is glycosylated (N-linked (GlcNAc...) asparagine). Positions 177 and 189 each coordinate Zn(2+). Glutamate 222 functions as the Proton acceptor in the catalytic mechanism. Zn(2+) contacts are provided by glutamate 223, glutamate 248, and histidine 320. The N-linked (GlcNAc...) asparagine glycan is linked to asparagine 354. The helical transmembrane segment at 380-400 (VTINSVLIVLFPILSGPLLFI) threads the bilayer. Residues 401 to 411 (TVRYKKWKIGT) are Cytoplasmic-facing. Residues 412–432 (SNFLSLPLAIVLTVAIVMIVV) traverse the membrane as a helical segment. Residues 433 to 449 (NQGFQIANPFLPSSHPL) are Vacuolar-facing. Residues 450-470 (LLVATTTSISLLIYYVFLNGV) form a helical membrane-spanning segment. Over 471–480 (NWVSPSGDQK) the chain is Cytoplasmic. A helical membrane pass occupies residues 481–501 (LITIIEISFIYWLILIYVTHG). Residues 502–514 (LSQNKIGDDHTGE) lie on the Vacuolar side of the membrane. Residues 515–535 (FPFTVLFFLEATASLFGLIGW) form a helical membrane-spanning segment. Residues 536-598 (TFSRSIKQSS…FGYDWSLQYL (63 aa)) lie on the Cytoplasmic side of the membrane. A disordered region spans residues 542–570 (KQSSNDGSDEPLLTGTAERYGSDDTDEDE). Residues 599-619 (LIVPISSLIIFNSGWLVLDGI) traverse the membrane as a helical segment. Asparagine 620 carries an N-linked (GlcNAc...) asparagine glycan. The Vacuolar segment spans residues 620–631 (NKSIQESFAAEN). A helical membrane pass occupies residues 632–652 (LIYLLIQLFSQFWILPILPFV). Over 653–657 (YKLNR) the chain is Cytoplasmic. Residues 658-678 (FIVFGLTIFAISGVALISFLD) traverse the membrane as a helical segment. At 679–930 (PFNQENPLKL…LVSVSLKIEV (252 aa)) the chain is on the vacuolar side. Asparagine 697, asparagine 768, asparagine 808, and asparagine 890 each carry an N-linked (GlcNAc...) asparagine glycan.

It belongs to the peptidase M28 family. It depends on Zn(2+) as a cofactor.

It is found in the vacuole membrane. May be involved in vacuolar sorting and osmoregulation. In Candida dubliniensis (strain CD36 / ATCC MYA-646 / CBS 7987 / NCPF 3949 / NRRL Y-17841) (Yeast), this protein is Vacuolar membrane protease.